A 434-amino-acid polypeptide reads, in one-letter code: Chaperone SurA (434 aa).

The signal sequence occupies residues 1-29 (MKTLRLNFRSAILKALGALLLLQGCLAHA). PpiC domains follow at residues 180–281 (AEEY…AMLE) and 290–389 (VEQS…QVQD).

It is found in the periplasm. The enzyme catalyses [protein]-peptidylproline (omega=180) = [protein]-peptidylproline (omega=0). Chaperone involved in the correct folding and assembly of outer membrane proteins. Recognizes specific patterns of aromatic residues and the orientation of their side chains, which are found more frequently in integral outer membrane proteins. May act in both early periplasmic and late outer membrane-associated steps of protein maturation. The chain is Chaperone SurA from Hahella chejuensis (strain KCTC 2396).